A 364-amino-acid chain; its full sequence is Caffeic acid 3-O-methyltransferase (364 aa).

131 to 137 lines the substrate pocket; the sequence is MNQDKVL. The substrate binding stretch occupies residues 163–181; that stretch reads AFEYHGTDSRFNRVFNEGM. Positions 209, 232, 252, 253, and 266 each coordinate S-adenosyl-L-methionine. The active-site Proton acceptor is the H270.

Belongs to the class I-like SAM-binding methyltransferase superfamily. Cation-independent O-methyltransferase family. COMT subfamily. Homodimer. In terms of tissue distribution, confined to the vascular tissues of organs undergoing lignification such as stems and roots.

It catalyses the reaction (E)-caffeate + S-adenosyl-L-methionine = (E)-ferulate + S-adenosyl-L-homocysteine + H(+). The catalysed reaction is tricetin + 2 S-adenosyl-L-methionine = 3',5'-di-O-methyltricetin + 2 S-adenosyl-L-homocysteine + 2 H(+). It carries out the reaction luteolin + S-adenosyl-L-methionine = chrysoeriol + S-adenosyl-L-homocysteine + H(+). The enzyme catalyses tricetin + S-adenosyl-L-methionine = 3'-O-methyltricetin + S-adenosyl-L-homocysteine + H(+). Its pathway is aromatic compound metabolism; phenylpropanoid biosynthesis. Its function is as follows. Catalyzes the conversion of caffeic acid to ferulic acid and of 5-hydroxyferulic acid to sinapic acid. The resulting products may subsequently be converted to the corresponding alcohols that are incorporated into lignins. Can use the flavone tricetin (5,7,3',4',5'-pentahydroxyflavone) as the preferred substrate and give rise to its 3',5'-dimethyl derivative, tricin (3',5'-dimethoxy-5,7,4'-trihydroxyflavone), as the major product, and selgin to a lower extent. Tricin exhibits potential benefits for human health including relaxant effect on smooth muscle of intestinal tissues, antioxidant effect, antihistaminic activity, and growth inhibition of human malignant breast tumor cells and colon cancer cells. Can also use luteolin, quercetin and 5-hydroxyferulic acid (5HF) as substrates. This is Caffeic acid 3-O-methyltransferase from Zea mays (Maize).